The chain runs to 196 residues: Ribonuclease S-F11 (196 aa).

An intrachain disulfide couples Cys16 to Cys21. N-linked (GlcNAc...) asparagine glycosylation is present at Asn28. The Proton donor role is filled by His32. RNA is bound by residues His32 and 69–70; that span reads QL. Disulfide bonds link Cys46–Cys94, Cys153–Cys186, and Cys169–Cys180. The active site involves Gln87. 90–91 is an RNA binding site; that stretch reads KH. The active-site Proton acceptor is His91.

It belongs to the RNase T2 family. Monomer.

It localises to the secreted. It is found in the extracellular space. It catalyses the reaction a ribonucleotidyl-ribonucleotide-RNA + H2O = a 3'-end 3'-phospho-ribonucleotide-RNA + a 5'-end dephospho-ribonucleoside-RNA + H(+). Self-incompatibility (SI) is the inherited ability of a flowering plant to prevent self-fertilization by discriminating between self and non-self pollen during pollination. In many species of the Solanaceae, self-incompatibility is controlled by the single, multiallelic locus S. The chain is Ribonuclease S-F11 from Nicotiana alata (Winged tobacco).